The chain runs to 611 residues: Chaperone protein DnaK (611 aa).

Phosphothreonine; by autocatalysis is present on Thr-173. The segment covering 577–591 has biased composition (low complexity); the sequence is AAAAQAAQGGEADAG. Positions 577–611 are disordered; the sequence is AAAAQAAQGGEADAGAGKKDDGVVDADFEEVKDDK. Acidic residues predominate over residues 599–611; it reads VVDADFEEVKDDK.

The protein belongs to the heat shock protein 70 family.

In terms of biological role, acts as a chaperone. This Lysinibacillus sphaericus (strain C3-41) protein is Chaperone protein DnaK.